We begin with the raw amino-acid sequence, 45 residues long: Large ribosomal subunit protein bL34 (45 aa).

Belongs to the bacterial ribosomal protein bL34 family.

This is Large ribosomal subunit protein bL34 from Clavibacter michiganensis subsp. michiganensis (strain NCPPB 382).